The primary structure comprises 809 residues: Trimethylamine-N-oxide reductase 2 (809 aa).

Residues 1–31 (MTLTRREFIKHSGIAAGALVVTSAAPLPAWA) constitute a signal peptide (tat-type signal). Ser-176 serves as a coordination point for Mo-bis(molybdopterin guanine dinucleotide).

It belongs to the prokaryotic molybdopterin-containing oxidoreductase family. Mo-bis(molybdopterin guanine dinucleotide) is required as a cofactor. In terms of processing, predicted to be exported by the Tat system. The position of the signal peptide cleavage has not been experimentally proven.

It is found in the periplasm. The enzyme catalyses trimethylamine + 2 Fe(III)-[cytochrome c] + H2O = trimethylamine N-oxide + 2 Fe(II)-[cytochrome c] + 3 H(+). In terms of biological role, reduces trimethylamine-N-oxide (TMAO) into trimethylamine; an anaerobic reaction coupled to energy-yielding reactions. Can also reduce other N- and S-oxide compounds such as 4-methylmorpholine-N-oxide and biotin sulfoxide (BSO), but with a lower catalytic efficiency. This chain is Trimethylamine-N-oxide reductase 2 (torZ), found in Escherichia coli O157:H7.